Here is a 217-residue protein sequence, read N- to C-terminus: MNQSLLTPFGNPFQRVEQALSALQQGNGVLVVDDEDRENEGDLIFSAEKMTPQQMALMIRECSGIVCLCLTEERIRQLALPMMVEHNTSANQTGFTVTIEAARGVTTGVSAQDRITTIRTAIADGAVASDLNRPGHVFPLRARAGGVLTRRGHTEATIDLMKLAGLKPYGVLCEVQNEDGSMARLPGIVEFANKHNMPVLCIEDLVAYLTENAKAAG.

Residues 37–38 (RE), aspartate 42, 150–154 (RRGHT), and glutamate 174 each bind D-ribulose 5-phosphate. Glutamate 38 is a Mg(2+) binding site. Position 153 (histidine 153) interacts with Mg(2+).

The protein belongs to the DHBP synthase family. As to quaternary structure, homodimer. It depends on Mg(2+) as a cofactor. Mn(2+) serves as cofactor.

It catalyses the reaction D-ribulose 5-phosphate = (2S)-2-hydroxy-3-oxobutyl phosphate + formate + H(+). It participates in cofactor biosynthesis; riboflavin biosynthesis; 2-hydroxy-3-oxobutyl phosphate from D-ribulose 5-phosphate: step 1/1. Catalyzes the conversion of D-ribulose 5-phosphate to formate and 3,4-dihydroxy-2-butanone 4-phosphate. This is 3,4-dihydroxy-2-butanone 4-phosphate synthase from Tolumonas auensis (strain DSM 9187 / NBRC 110442 / TA 4).